A 256-amino-acid polypeptide reads, in one-letter code: Acetyl-coenzyme A carboxylase carboxyl transferase subunit alpha (256 aa).

Residues 1–236 enclose the CoA carboxyltransferase C-terminal domain; that stretch reads MTDVSRVLKE…KANLIEQITS (236 aa).

The protein belongs to the AccA family. In terms of assembly, acetyl-CoA carboxylase is a heterohexamer composed of biotin carboxyl carrier protein (AccB), biotin carboxylase (AccC) and two subunits each of ACCase subunit alpha (AccA) and ACCase subunit beta (AccD).

Its subcellular location is the cytoplasm. It carries out the reaction N(6)-carboxybiotinyl-L-lysyl-[protein] + acetyl-CoA = N(6)-biotinyl-L-lysyl-[protein] + malonyl-CoA. It participates in lipid metabolism; malonyl-CoA biosynthesis; malonyl-CoA from acetyl-CoA: step 1/1. Functionally, component of the acetyl coenzyme A carboxylase (ACC) complex. First, biotin carboxylase catalyzes the carboxylation of biotin on its carrier protein (BCCP) and then the CO(2) group is transferred by the carboxyltransferase to acetyl-CoA to form malonyl-CoA. The protein is Acetyl-coenzyme A carboxylase carboxyl transferase subunit alpha of Streptococcus pyogenes serotype M2 (strain MGAS10270).